Here is a 271-residue protein sequence, read N- to C-terminus: Adenosylcobinamide-GDP ribazoletransferase (271 aa).

Transmembrane regions (helical) follow at residues 4-24 (FLLALRTTFGFLSTIPVGMSM), 35-55 (YLQTFAGIVLGSMIGIFAYLT), 58-78 (FLPSTISAVLIMVFIYYITGL), 108-128 (SLGIGGVSYTVLALIALYASI), 135-155 (VLFFSDNAALIIAISLLIAEI), 192-212 (FVLGALVCVLAFGTLGIIGYI), and 246-266 (IIVLMVLTVAITAVNNGYGGL).

It belongs to the CobS family. Requires Mg(2+) as cofactor.

The protein resides in the cell membrane. The enzyme catalyses alpha-ribazole + adenosylcob(III)inamide-GDP = adenosylcob(III)alamin + GMP + H(+). It catalyses the reaction alpha-ribazole 5'-phosphate + adenosylcob(III)inamide-GDP = adenosylcob(III)alamin 5'-phosphate + GMP + H(+). The protein operates within cofactor biosynthesis; adenosylcobalamin biosynthesis; adenosylcobalamin from cob(II)yrinate a,c-diamide: step 7/7. In terms of biological role, joins adenosylcobinamide-GDP and alpha-ribazole to generate adenosylcobalamin (Ado-cobalamin). Also synthesizes adenosylcobalamin 5'-phosphate from adenosylcobinamide-GDP and alpha-ribazole 5'-phosphate. The protein is Adenosylcobinamide-GDP ribazoletransferase of Methanococcoides burtonii (strain DSM 6242 / NBRC 107633 / OCM 468 / ACE-M).